The sequence spans 197 residues: Protein Hikeshi (197 aa).

Positions 18 to 55 are required for F-X-F-G repeats-nucleoporins recognition and nuclear import; the sequence is VAEDKFVFDLPDYENINHVVVFMLGTVPFPEGMGGSVY. A flexible linker region involved in nuclear import of HSP70 proteins region spans residues 124–134; it reads QTPVGNAAVSS.

It belongs to the OPI10 family. In terms of assembly, forms an asymmetric homodimer; required for binding and nuclear import of HSP70 proteins. Interacts with ATP-bound HSP70 proteins. Interacts with NUP62 and NUP153 (via F-X-F-G repeats). Interacts with HSPA8.

It is found in the cytoplasm. It localises to the cytosol. Its subcellular location is the nucleus. Its function is as follows. Acts as a specific nuclear import carrier for HSP70 proteins following heat-shock stress: acts by mediating the nucleoporin-dependent translocation of ATP-bound HSP70 proteins into the nucleus. HSP70 proteins import is required to protect cells from heat shock damages. Does not translocate ADP-bound HSP70 proteins into the nucleus. The protein is Protein Hikeshi of Bos taurus (Bovine).